Here is a 425-residue protein sequence, read N- to C-terminus: UPF0597 protein VFMJ11_0655 (425 aa).

Belongs to the UPF0597 family.

The polypeptide is UPF0597 protein VFMJ11_0655 (Aliivibrio fischeri (strain MJ11) (Vibrio fischeri)).